The sequence spans 253 residues: Sulfate transporter CysZ (253 aa).

4 helical membrane-spanning segments follow: residues 31-51, 75-95, 151-171, and 222-242; these read FVIL…WWLF, LLWP…FSTI, IVLL…PVLW, and IPLL…AMWV.

This sequence belongs to the CysZ family.

Its subcellular location is the cell inner membrane. Its function is as follows. High affinity, high specificity proton-dependent sulfate transporter, which mediates sulfate uptake. Provides the sulfur source for the cysteine synthesis pathway. The protein is Sulfate transporter CysZ of Shigella dysenteriae serotype 1 (strain Sd197).